A 488-amino-acid chain; its full sequence is Kelch-like protein 15 (488 aa).

A BTB domain is found at 31–98 (LDVTLVIEDH…MYYGTIELSM (68 aa)). The region spanning 133 to 237 (CAEIMRLLDD…TPSSVFEKVK (105 aa)) is the BACK domain. Kelch repeat units follow at residues 328 to 379 (FVFL…VIGR), 381 to 426 (VYAV…VLGN), and 428 to 473 (LYIT…NKCK).

In terms of assembly, homodimer. Interacts with CUL3.

It localises to the nucleus. It functions in the pathway protein modification; protein ubiquitination. In terms of biological role, substrate-specific adapter for CUL3 E3 ubiquitin-protein ligase complex. This is Kelch-like protein 15 (KLHL15) from Gallus gallus (Chicken).